The following is a 342-amino-acid chain: L-threonine 3-dehydrogenase (342 aa).

Residue Cys-38 participates in Zn(2+) binding. Catalysis depends on charge relay system residues Thr-40 and His-43. Residues His-63, Glu-64, Cys-93, Cys-96, Cys-99, and Cys-107 each coordinate Zn(2+). NAD(+)-binding positions include Ile-175, Asp-195, Arg-200, 262-264 (LGI), and 286-287 (IY).

It belongs to the zinc-containing alcohol dehydrogenase family. As to quaternary structure, homotetramer. Requires Zn(2+) as cofactor.

It is found in the cytoplasm. The enzyme catalyses L-threonine + NAD(+) = (2S)-2-amino-3-oxobutanoate + NADH + H(+). Its pathway is amino-acid degradation; L-threonine degradation via oxydo-reductase pathway; glycine from L-threonine: step 1/2. In terms of biological role, catalyzes the NAD(+)-dependent oxidation of L-threonine to 2-amino-3-ketobutyrate. In Burkholderia cenocepacia (strain ATCC BAA-245 / DSM 16553 / LMG 16656 / NCTC 13227 / J2315 / CF5610) (Burkholderia cepacia (strain J2315)), this protein is L-threonine 3-dehydrogenase.